A 90-amino-acid polypeptide reads, in one-letter code: Probable Fe(2+)-trafficking protein (90 aa).

It belongs to the Fe(2+)-trafficking protein family. In terms of assembly, monomer.

Could be a mediator in iron transactions between iron acquisition and iron-requiring processes, such as synthesis and/or repair of Fe-S clusters in biosynthetic enzymes. The polypeptide is Probable Fe(2+)-trafficking protein (Yersinia pestis bv. Antiqua (strain Antiqua)).